Here is a 91-residue protein sequence, read N- to C-terminus: Putative septation protein SpoVG (91 aa).

It belongs to the SpoVG family.

In terms of biological role, could be involved in septation. In Caldanaerobacter subterraneus subsp. tengcongensis (strain DSM 15242 / JCM 11007 / NBRC 100824 / MB4) (Thermoanaerobacter tengcongensis), this protein is Putative septation protein SpoVG.